The chain runs to 518 residues: Sensor protein kinase HptS (518 aa).

Transmembrane regions (helical) follow at residues 20–40 (IFPVFLVIIIGLVSFYAIYIW) and 222–242 (GITLLIVMAVVLVLLVIFGFI). Residues 297 to 513 (EQLIHSIEHT…LICYKIPLSR (217 aa)) enclose the Histidine kinase domain. A Phosphohistidine; by autocatalysis modification is found at H325.

Autophosphorylated.

Its subcellular location is the cell membrane. It catalyses the reaction ATP + protein L-histidine = ADP + protein N-phospho-L-histidine.. Functionally, member of the two-component regulatory system HptS/HptR that regulates genes involved in hexose phosphate transport system in response to changes in extracellular phosphate sources. May act as a sensor protein kinase which is autophosphorylated at a histidine residue and transfers its phosphate group to the conserved aspartic acid residue in the regulatory domain of HptS. In turn, HptS antagonizes CcpA-dependent transcription of a subset of CcpA-regulated genes involved in antibiotic susceptibility. The protein is Sensor protein kinase HptS (hptS) of Staphylococcus aureus (strain Mu50 / ATCC 700699).